A 185-amino-acid chain; its full sequence is Ribosome-recycling factor (185 aa).

The protein belongs to the RRF family.

The protein localises to the cytoplasm. Its function is as follows. Responsible for the release of ribosomes from messenger RNA at the termination of protein biosynthesis. May increase the efficiency of translation by recycling ribosomes from one round of translation to another. This Vibrio cholerae serotype O1 (strain ATCC 39541 / Classical Ogawa 395 / O395) protein is Ribosome-recycling factor.